Consider the following 233-residue polypeptide: C-type lectin domain-containing protein 87 (233 aa).

The N-terminal stretch at methionine 1–alanine 20 is a signal peptide. Residue asparagine 26 is glycosylated (N-linked (GlcNAc...) asparagine). Serine 32 is a glycosylation site (O-linked (Xyl...) (chondroitin sulfate) serine). Residue asparagine 81 is glycosylated (N-linked (GlcNAc...) asparagine). Residues phenylalanine 93–glutamate 223 enclose the C-type lectin domain. 2 disulfides stabilise this stretch: cysteine 114-cysteine 222 and cysteine 193-cysteine 214. N-linked (GlcNAc...) asparagine glycosylation is present at asparagine 225.

The protein is C-type lectin domain-containing protein 87 of Caenorhabditis briggsae.